A 90-amino-acid chain; its full sequence is ATP-dependent Clp protease adapter protein ClpS (90 aa).

This sequence belongs to the ClpS family. In terms of assembly, binds to the N-terminal domain of the chaperone ClpA.

In terms of biological role, involved in the modulation of the specificity of the ClpAP-mediated ATP-dependent protein degradation. This is ATP-dependent Clp protease adapter protein ClpS from Helicobacter pylori (strain J99 / ATCC 700824) (Campylobacter pylori J99).